A 59-amino-acid chain; its full sequence is Large ribosomal subunit protein bL32 (59 aa).

The segment at 1-59 (MAVQQNKKSPSKRGMHRSHDALTAPALSVDSTTGEVHRPHHISPNGMYRGRKVVKAKGE) is disordered. Residues 49 to 59 (RGRKVVKAKGE) are compositionally biased toward basic residues.

This sequence belongs to the bacterial ribosomal protein bL32 family.

This is Large ribosomal subunit protein bL32 (rpmF) from Neisseria meningitidis serogroup B (strain ATCC BAA-335 / MC58).